Consider the following 588-residue polypeptide: Proline--tRNA ligase (588 aa).

It belongs to the class-II aminoacyl-tRNA synthetase family. ProS type 1 subfamily. As to quaternary structure, homodimer.

The protein localises to the cytoplasm. The enzyme catalyses tRNA(Pro) + L-proline + ATP = L-prolyl-tRNA(Pro) + AMP + diphosphate. Functionally, catalyzes the attachment of proline to tRNA(Pro) in a two-step reaction: proline is first activated by ATP to form Pro-AMP and then transferred to the acceptor end of tRNA(Pro). As ProRS can inadvertently accommodate and process non-cognate amino acids such as alanine and cysteine, to avoid such errors it has two additional distinct editing activities against alanine. One activity is designated as 'pretransfer' editing and involves the tRNA(Pro)-independent hydrolysis of activated Ala-AMP. The other activity is designated 'posttransfer' editing and involves deacylation of mischarged Ala-tRNA(Pro). The misacylated Cys-tRNA(Pro) is not edited by ProRS. The protein is Proline--tRNA ligase of Corynebacterium glutamicum (strain ATCC 13032 / DSM 20300 / JCM 1318 / BCRC 11384 / CCUG 27702 / LMG 3730 / NBRC 12168 / NCIMB 10025 / NRRL B-2784 / 534).